The primary structure comprises 946 residues: Glucoamylase 1 (946 aa).

The first 20 residues, 1-20, serve as a signal peptide directing secretion; it reads MKLLSKVFVTALGLTSIVNA. N-linked (GlcNAc...) asparagine glycosylation is found at Asn-51, Asn-68, Asn-97, Asn-187, Asn-244, Asn-373, Asn-393, Asn-406, and Asn-437. Residues Asp-462 and Glu-465 contribute to the active site. The N-linked (GlcNAc...) asparagine glycan is linked to Asn-505. Residues 517 to 532 are compositionally biased toward low complexity; sequence AATKTTTTTSSSTSTS. The tract at residues 517–541 is disordered; the sequence is AATKTTTTTSSSTSTSIDGKNTLAP. An N-linked (GlcNAc...) asparagine glycan is attached at Asn-570. Asp-628 serves as the catalytic Proton donor. Residues Asn-704, Asn-772, Asn-801, Asn-895, and Asn-912 are each glycosylated (N-linked (GlcNAc...) asparagine).

Belongs to the glycosyl hydrolase 31 family. Post-translationally, the N-terminus is blocked.

The protein resides in the secreted. It is found in the cell wall. The protein localises to the membrane. The catalysed reaction is Hydrolysis of terminal (1-&gt;4)-linked alpha-D-glucose residues successively from non-reducing ends of the chains with release of beta-D-glucose.. This Candida albicans (strain SC5314 / ATCC MYA-2876) (Yeast) protein is Glucoamylase 1 (GAM1).